The chain runs to 254 residues: Phosphoribosylaminoimidazole-succinocarboxamide synthase (254 aa).

This sequence belongs to the SAICAR synthetase family.

It catalyses the reaction 5-amino-1-(5-phospho-D-ribosyl)imidazole-4-carboxylate + L-aspartate + ATP = (2S)-2-[5-amino-1-(5-phospho-beta-D-ribosyl)imidazole-4-carboxamido]succinate + ADP + phosphate + 2 H(+). It participates in purine metabolism; IMP biosynthesis via de novo pathway; 5-amino-1-(5-phospho-D-ribosyl)imidazole-4-carboxamide from 5-amino-1-(5-phospho-D-ribosyl)imidazole-4-carboxylate: step 1/2. The polypeptide is Phosphoribosylaminoimidazole-succinocarboxamide synthase (Bartonella tribocorum (strain CIP 105476 / IBS 506)).